The following is an 80-amino-acid chain: Small ribosomal subunit protein bS16 (80 aa).

Belongs to the bacterial ribosomal protein bS16 family.

This Wigglesworthia glossinidia brevipalpis protein is Small ribosomal subunit protein bS16.